We begin with the raw amino-acid sequence, 358 residues long: Putative glycylpeptide N-tetradecanoyltransferase (358 aa).

It belongs to the NMT family.

It carries out the reaction N-terminal glycyl-[protein] + tetradecanoyl-CoA = N-tetradecanoylglycyl-[protein] + CoA + H(+). Adds a myristoyl group to the N-terminal glycine residue of certain proteins. In Acanthamoeba polyphaga (Amoeba), this protein is Putative glycylpeptide N-tetradecanoyltransferase.